We begin with the raw amino-acid sequence, 336 residues long: Ribose-phosphate pyrophosphokinase 1 (336 aa).

The Mg(2+) site is built by Asp150, His152, Asp161, and Asp165. A binding of phosphoribosylpyrophosphate region spans residues 236 to 251 (GKVAVMVDDMIDTAGT).

It belongs to the ribose-phosphate pyrophosphokinase family.

It catalyses the reaction D-ribose 5-phosphate + ATP = 5-phospho-alpha-D-ribose 1-diphosphate + AMP + H(+). The polypeptide is Ribose-phosphate pyrophosphokinase 1 (PRS1) (Spinacia oleracea (Spinach)).